Consider the following 94-residue polypeptide: Small ubiquitin-related modifier 3 (94 aa).

Residue lysine 11 forms a Glycyl lysine isopeptide (Lys-Gly) (interchain with G-Cter in SUMO) linkage. In terms of domain architecture, Ubiquitin-like spans 15–92; sequence DHINLKVAGQ…IDVFQQQTGG (78 aa). Residue glycine 92 forms a Glycyl lysine isopeptide (Gly-Lys) (interchain with K-? in acceptor proteins) linkage. A propeptide spanning residues 93-94 is cleaved from the precursor; sequence SC.

It belongs to the ubiquitin family. SUMO subfamily. Interacts with sae2 and ube2i. Covalently attached to a number of proteins. Polymeric chains can be formed through Lys-11 cross-linking. In terms of processing, cleavage of precursor form by a sentrin-specific protease is necessary for function.

The protein resides in the cytoplasm. It localises to the nucleus. Its subcellular location is the PML body. Its function is as follows. Ubiquitin-like protein which can be covalently attached to target lysines either as a monomer or as a lysine-linked polymer. Does not seem to be involved in protein degradation and may function as an antagonist of ubiquitin in the degradation process. Plays a role in a number of cellular processes such as nuclear transport, DNA replication and repair, mitosis and signal transduction. Covalent attachment to its substrates requires prior activation by the E1 complex sae1-sae2 and linkage to the E2 enzyme ube2i. This is Small ubiquitin-related modifier 3 (sumo3) from Danio rerio (Zebrafish).